The primary structure comprises 169 residues: Peptide deformylase (169 aa).

Fe cation-binding residues include Cys92 and His134. Glu135 is a catalytic residue. His138 lines the Fe cation pocket.

This sequence belongs to the polypeptide deformylase family. Fe(2+) is required as a cofactor.

The catalysed reaction is N-terminal N-formyl-L-methionyl-[peptide] + H2O = N-terminal L-methionyl-[peptide] + formate. Its function is as follows. Removes the formyl group from the N-terminal Met of newly synthesized proteins. Requires at least a dipeptide for an efficient rate of reaction. N-terminal L-methionine is a prerequisite for activity but the enzyme has broad specificity at other positions. The chain is Peptide deformylase from Cellvibrio japonicus (strain Ueda107) (Pseudomonas fluorescens subsp. cellulosa).